Consider the following 449-residue polypeptide: N-succinylarginine dihydrolase (449 aa).

Substrate contacts are provided by residues G19–S28, N110, and H137–R138. A disordered region spans residues Y23 to R43. Over residues A27–N37 the composition is skewed to low complexity. Residue E174 is part of the active site. Residue R214 coordinates substrate. H250 is an active-site residue. 2 residues coordinate substrate: D252 and N365. The active-site Nucleophile is C371.

Belongs to the succinylarginine dihydrolase family. Homodimer.

It carries out the reaction N(2)-succinyl-L-arginine + 2 H2O + 2 H(+) = N(2)-succinyl-L-ornithine + 2 NH4(+) + CO2. It participates in amino-acid degradation; L-arginine degradation via AST pathway; L-glutamate and succinate from L-arginine: step 2/5. Catalyzes the hydrolysis of N(2)-succinylarginine into N(2)-succinylornithine, ammonia and CO(2). This Pseudomonas putida (strain ATCC 700007 / DSM 6899 / JCM 31910 / BCRC 17059 / LMG 24140 / F1) protein is N-succinylarginine dihydrolase.